A 101-amino-acid polypeptide reads, in one-letter code: Chaperone modulatory protein CbpM (101 aa).

It belongs to the CbpM family.

In terms of biological role, interacts with CbpA and inhibits both the DnaJ-like co-chaperone activity and the DNA binding activity of CbpA. Together with CbpA, modulates the activity of the DnaK chaperone system. Does not inhibit the co-chaperone activity of DnaJ. The sequence is that of Chaperone modulatory protein CbpM from Pseudomonas putida (strain ATCC 47054 / DSM 6125 / CFBP 8728 / NCIMB 11950 / KT2440).